The primary structure comprises 94 residues: Co-chaperonin GroES (94 aa).

Belongs to the GroES chaperonin family. In terms of assembly, heptamer of 7 subunits arranged in a ring. Interacts with the chaperonin GroEL.

The protein localises to the cytoplasm. Its function is as follows. Together with the chaperonin GroEL, plays an essential role in assisting protein folding. The GroEL-GroES system forms a nano-cage that allows encapsulation of the non-native substrate proteins and provides a physical environment optimized to promote and accelerate protein folding. GroES binds to the apical surface of the GroEL ring, thereby capping the opening of the GroEL channel. The protein is Co-chaperonin GroES of Listeria welshimeri serovar 6b (strain ATCC 35897 / DSM 20650 / CCUG 15529 / CIP 8149 / NCTC 11857 / SLCC 5334 / V8).